The chain runs to 518 residues: ETHYLENE INSENSITIVE 3-like 2 protein (518 aa).

The stretch at 37–73 forms a coiled coil; the sequence is DDLSSDEEMEIEELEKKIWRDKQRLKRLKEMAKNGLG. Positions 450–518 are disordered; sequence FNHPNDLYRP…GQELPTSWIQ (69 aa). 2 stretches are compositionally biased toward polar residues: residues 475 to 484 and 500 to 518; these read PSPSTLNQNL and GTEN…SWIQ.

The protein belongs to the EIN3 family. In terms of assembly, acts as a homodimer to bind the primary ethylene response element.

It localises to the nucleus. In terms of biological role, probable transcription factor acting as a positive regulator in the ethylene response pathway. Could bind the primary ethylene response element present in the ETHYLENE-RESPONSE-FACTOR1 promoter. The protein is ETHYLENE INSENSITIVE 3-like 2 protein (EIL2) of Arabidopsis thaliana (Mouse-ear cress).